Here is a 495-residue protein sequence, read N- to C-terminus: Adenosylhomocysteinase (495 aa).

The substrate site is built by Thr-71, Asp-156, and Glu-218. 219-221 is an NAD(+) binding site; it reads TTT. Residues Lys-248 and Asp-252 each coordinate substrate. NAD(+)-binding positions include Asn-253, 282 to 287, Glu-305, Asn-340, 361 to 363, and Asn-409; these read GYGDVG and IGH.

This sequence belongs to the adenosylhomocysteinase family. The cofactor is NAD(+).

Its subcellular location is the cytoplasm. It carries out the reaction S-adenosyl-L-homocysteine + H2O = L-homocysteine + adenosine. Its pathway is amino-acid biosynthesis; L-homocysteine biosynthesis; L-homocysteine from S-adenosyl-L-homocysteine: step 1/1. Its function is as follows. May play a key role in the regulation of the intracellular concentration of adenosylhomocysteine. The protein is Adenosylhomocysteinase of Mycobacterium tuberculosis (strain ATCC 25177 / H37Ra).